A 70-amino-acid chain; its full sequence is ATP synthase subunit c (70 aa).

The next 2 membrane-spanning stretches (helical) occupy residues 4–24 (IAAG…NGML) and 48–68 (ISMA…FVLI).

The protein belongs to the ATPase C chain family. In terms of assembly, F-type ATPases have 2 components, F(1) - the catalytic core - and F(0) - the membrane proton channel. F(1) has five subunits: alpha(3), beta(3), gamma(1), delta(1), epsilon(1). F(0) has three main subunits: a(1), b(2) and c(10-14). The alpha and beta chains form an alternating ring which encloses part of the gamma chain. F(1) is attached to F(0) by a central stalk formed by the gamma and epsilon chains, while a peripheral stalk is formed by the delta and b chains.

Its subcellular location is the cell membrane. Its function is as follows. F(1)F(0) ATP synthase produces ATP from ADP in the presence of a proton or sodium gradient. F-type ATPases consist of two structural domains, F(1) containing the extramembraneous catalytic core and F(0) containing the membrane proton channel, linked together by a central stalk and a peripheral stalk. During catalysis, ATP synthesis in the catalytic domain of F(1) is coupled via a rotary mechanism of the central stalk subunits to proton translocation. In terms of biological role, key component of the F(0) channel; it plays a direct role in translocation across the membrane. A homomeric c-ring of between 10-14 subunits forms the central stalk rotor element with the F(1) delta and epsilon subunits. In Oenococcus oeni (strain ATCC BAA-331 / PSU-1), this protein is ATP synthase subunit c.